A 182-amino-acid chain; its full sequence is MSLADIIKDIDKSREEQISKINDEYSKRIEELKKSCDSRIQSIKEYYEKKKEADIKTLKKVQEDKIKIDSKSIKMEKRREIVKDALDISYYHLMNITKSKRYDSILNSMVSTAIKTLGEDCEIFASESDAKKINNAKADHKINGGIIAYSKDKKRMLDFRLNSIFENIKDDLASYFYENIEE.

This sequence belongs to the V-ATPase E subunit family. Has multiple subunits with at least A(3), B(3), C, D, E, F, H, I and proteolipid K(x).

It is found in the cell membrane. Its function is as follows. Component of the A-type ATP synthase that produces ATP from ADP in the presence of a proton gradient across the membrane. This chain is A-type ATP synthase subunit E, found in Picrophilus torridus (strain ATCC 700027 / DSM 9790 / JCM 10055 / NBRC 100828 / KAW 2/3).